The sequence spans 172 residues: NADH dehydrogenase [ubiquinone] 1 alpha subcomplex subunit 8 (172 aa).

CHCH domains follow at residues 33–74 (GAQC…FRQI) and 75–118 (KRHC…LGWV). 4 short sequence motifs (cx9C motif) span residues 36–46 (CDKPNKEFMLC), 56–66 (CLEEGKLVNQC), 78–88 (CAEPFTEYWTC), and 100–110 (CRKQQAQFDEC). 4 disulfides stabilise this stretch: cysteine 36–cysteine 66, cysteine 46–cysteine 56, cysteine 78–cysteine 110, and cysteine 88–cysteine 100. A disordered region spans residues 133-159 (TDRPLPENPYHSRARPEPNPEVEGDLK). The segment covering 146–159 (ARPEPNPEVEGDLK) has biased composition (basic and acidic residues).

This sequence belongs to the complex I NDUFA8 subunit family. As to quaternary structure, complex I is composed of 45 different subunits.

Its subcellular location is the mitochondrion inner membrane. It localises to the mitochondrion intermembrane space. The protein localises to the mitochondrion. In terms of biological role, accessory subunit of the mitochondrial membrane respiratory chain NADH dehydrogenase (Complex I), that is believed not to be involved in catalysis. Complex I functions in the transfer of electrons from NADH to the respiratory chain. The immediate electron acceptor for the enzyme is believed to be ubiquinone. The sequence is that of NADH dehydrogenase [ubiquinone] 1 alpha subcomplex subunit 8 (NDUFA8) from Bos taurus (Bovine).